Consider the following 127-residue polypeptide: Protein chibby homolog 1 (127 aa).

The tract at residues 1–25 is disordered; the sequence is MPLFGSIFSPKKTPPRKSASLSNLH. Phosphoserine occurs at positions 9 and 20. A minimal region for the interaction with PKD2 region spans residues 60–112; the sequence is VADSVISGGVDRRETQRLRKRNQQLEEENNLLRLKVDILLDMLSETTAESHLK. The stretch at 68–110 forms a coiled coil; sequence GVDRRETQRLRKRNQQLEEENNLLRLKVDILLDMLSETTAESH. The tract at residues 77 to 98 is leucine-zipper; mediates homodimerization; the sequence is LRKRNQQLEEENNLLRLKVDIL.

This sequence belongs to the chibby family. Homodimer. Homodimerization is essential for nuclear localization and interaction with KPNA4 but is dispensable for interaction with CTNNB1. Interacts with polycystin-2/PKD2 and GM130. Interacts with the C-terminal region of CTNNB1. Interacts (C-terminus) with TCIM (C-terminus), TCIM competes with CTNNB1 for the interaction with CBY1. Interacts with FAM92A; this interaction facilitates targeting of FAM92A to cilium basal body. Interacts with CIBAR2. Interacts with KPNA4.

It localises to the nucleus speckle. It is found in the cytoplasm. The protein localises to the cytoskeleton. The protein resides in the cilium basal body. Its subcellular location is the microtubule organizing center. It localises to the centrosome. It is found in the centriole. The protein localises to the golgi apparatus. The protein resides in the trans-Golgi network. Its subcellular location is the cell projection. It localises to the cilium. It is found in the flagellum. The protein localises to the nucleus. In terms of biological role, inhibits the Wnt/Wingless pathway by binding to CTNNB1/beta-catenin and inhibiting beta-catenin-mediated transcriptional activation through competition with TCF/LEF transcription factors. Has also been shown to play a role in regulating the intracellular trafficking of polycystin-2/PKD2 and possibly of other intracellular proteins. Promotes adipocyte and cardiomyocyte differentiation. This Rattus norvegicus (Rat) protein is Protein chibby homolog 1 (Cby1).